Reading from the N-terminus, the 33-residue chain is Large ribosomal subunit protein eL28 (33 aa).

This sequence belongs to the eukaryotic ribosomal protein eL28 family. As to quaternary structure, component of the large ribosomal subunit.

Its subcellular location is the cytoplasm. Its function is as follows. Component of the large ribosomal subunit. The ribosome is a large ribonucleoprotein complex responsible for the synthesis of proteins in the cell. This chain is Large ribosomal subunit protein eL28 (rpl28), found in Xenopus laevis (African clawed frog).